A 455-amino-acid chain; its full sequence is Putative RNA polymerase II subunit B1 CTD phosphatase rpap-2 (455 aa).

The segment at 36 to 121 (EHLPHLHCLG…LDEHPLWITG (86 aa)) adopts an RTR1-type zinc-finger fold. The Zn(2+) site is built by Cys-59, Cys-64, Cys-97, and Cys-101.

This sequence belongs to the RPAP2 family.

The protein resides in the nucleus. It catalyses the reaction O-phospho-L-seryl-[protein] + H2O = L-seryl-[protein] + phosphate. The catalysed reaction is O-phospho-L-threonyl-[protein] + H2O = L-threonyl-[protein] + phosphate. Putative RNA polymerase II subunit B1 C-terminal domain (CTD) phosphatase involved in RNA polymerase II transcription regulation. In Caenorhabditis elegans, this protein is Putative RNA polymerase II subunit B1 CTD phosphatase rpap-2.